Consider the following 247-residue polypeptide: Neurotrophic factor BDNF precursor form (247 aa).

The N-terminal stretch at 1 to 18 is a signal peptide; sequence MTILFLTMVISYFGCMKA. Positions 19-128 are excised as a propeptide; that stretch reads APMKEANVRG…AANMSVRVRR (110 aa). Asparagine 121 carries N-linked (GlcNAc...) asparagine glycosylation. 3 disulfide bridges follow: cysteine 141/cysteine 208, cysteine 186/cysteine 237, and cysteine 196/cysteine 239.

This sequence belongs to the NGF-beta family. In terms of assembly, monomers and homodimers. Binds to NTRK2/TRKB. Can form heterodimers with other neurotrophin family members, such as NTF3 and NTF4 (in vitro), but the physiological relevance of this is not clear. BDNF precursor form: interacts with the heterodimer formed by NGFR and SORCS2. Mature BDNF has much lower affinity for the heterodimer formed by NGFR and SORCS2. N-glycosylated and glycosulfated, contrary to mature BDNF. Post-translationally, mature BDNF is produced by proteolytic removal of the propeptide, catalyzed by a FURIN family member. In addition, the precursor form is proteolytically cleaved within the propeptide, but this is not an obligatory intermediate for the production of mature BDNF. Can be converted into mature BDNF by plasmin (PLG).

Its subcellular location is the secreted. Important signaling molecule that activates signaling cascades downstream of NTRK2. During development, promotes the survival and differentiation of selected neuronal populations of the peripheral and central nervous systems. Participates in axonal growth, pathfinding and in the modulation of dendritic growth and morphology. Major regulator of synaptic transmission and plasticity at adult synapses in many regions of the CNS. The versatility of BDNF is emphasized by its contribution to a range of adaptive neuronal responses including long-term potentiation (LTP), long-term depression (LTD), certain forms of short-term synaptic plasticity, as well as homeostatic regulation of intrinsic neuronal excitability. Functionally, important signaling molecule that activates signaling cascades downstream of NTRK2. Activates signaling cascades via the heterodimeric receptor formed by NGFR and SORCS2. Signaling via NGFR and SORCS2 plays a role in synaptic plasticity and long-term depression (LTD). Binding to NGFR and SORCS2 promotes neuronal apoptosis. Promotes neuronal growth cone collapse. The chain is Neurotrophic factor BDNF precursor form (BDNF) from Felis catus (Cat).